The chain runs to 620 residues: Proline--tRNA ligase (620 aa).

The protein belongs to the class-II aminoacyl-tRNA synthetase family. ProS type 1 subfamily. In terms of assembly, homodimer.

The protein resides in the cytoplasm. It catalyses the reaction tRNA(Pro) + L-proline + ATP = L-prolyl-tRNA(Pro) + AMP + diphosphate. In terms of biological role, catalyzes the attachment of proline to tRNA(Pro) in a two-step reaction: proline is first activated by ATP to form Pro-AMP and then transferred to the acceptor end of tRNA(Pro). As ProRS can inadvertently accommodate and process non-cognate amino acids such as alanine and cysteine, to avoid such errors it has two additional distinct editing activities against alanine. One activity is designated as 'pretransfer' editing and involves the tRNA(Pro)-independent hydrolysis of activated Ala-AMP. The other activity is designated 'posttransfer' editing and involves deacylation of mischarged Ala-tRNA(Pro). The misacylated Cys-tRNA(Pro) is not edited by ProRS. The chain is Proline--tRNA ligase from Streptococcus thermophilus (strain ATCC BAA-491 / LMD-9).